The sequence spans 98 residues: MVAVRRPWPVTVAMLLILLACLGALVDAYPAKPEAPGEDASPEELSRYYASLRHYLNLVTRQRYGKRDVPAALFSKLLFTDDSDSENLPFRPEGLDQW.

Positions 1–28 (MVAVRRPWPVTVAMLLILLACLGALVDA) are cleaved as a signal peptide. S41 carries the post-translational modification Phosphoserine. Position 64 is a tyrosine amide (Y64). Residues 68–98 (DVPAALFSKLLFTDDSDSENLPFRPEGLDQW) constitute a propeptide that is removed on maturation.

This sequence belongs to the NPY family. In terms of processing, the peptide YY form is cleaved at Pro-30 by the prolyl endopeptidase FAP (seprase) activity (in vitro) to generate peptide YY(3-36).

The protein resides in the secreted. Functionally, this gut peptide inhibits exocrine pancreatic secretion, has a vasoconstrictory action and inhibitis jejunal and colonic mobility. The sequence is that of Peptide YY (Pyy) from Mus musculus (Mouse).